The sequence spans 591 residues: Oligopeptide-binding protein OppA (591 aa).

Belongs to the bacterial solute-binding protein 5 family. The complex is composed of an ATP-binding protein (OppD), two transmembrane proteins (OppB and OppC) and a solute-binding protein (OppA).

The protein resides in the periplasm. Its function is as follows. Part of the ABC transporter complex OppABCD involved in the uptake of oligopeptides. Peptide-binding protein that shows broad specificity but a moderate preference for hydrophobic oligopeptides and those that are 6-16 amino acids long. The protein is Oligopeptide-binding protein OppA of Mycobacterium bovis (strain ATCC BAA-935 / AF2122/97).